A 240-amino-acid chain; its full sequence is PF03932 family protein CutC (240 aa).

Belongs to the CutC family.

The protein resides in the cytoplasm. This is PF03932 family protein CutC from Xanthomonas campestris pv. campestris (strain B100).